The sequence spans 103 residues: MADQKIRIRLKAFDHRLIDRSASEIVETAKRTGAQVRGPIPLPTKIERYTVLVSPHVDKDARDQYETRTHKRVLDIVDPNDKTVDALMKLELAAGVDVQIKLT.

Belongs to the universal ribosomal protein uS10 family. As to quaternary structure, part of the 30S ribosomal subunit.

Involved in the binding of tRNA to the ribosomes. This chain is Small ribosomal subunit protein uS10, found in Stenotrophomonas maltophilia (strain R551-3).